Consider the following 244-residue polypeptide: tRNA (guanine-N(1)-)-methyltransferase (244 aa).

S-adenosyl-L-methionine is bound by residues G112 and 132-137 (IGDYIL).

It belongs to the RNA methyltransferase TrmD family. As to quaternary structure, homodimer.

It localises to the cytoplasm. It carries out the reaction guanosine(37) in tRNA + S-adenosyl-L-methionine = N(1)-methylguanosine(37) in tRNA + S-adenosyl-L-homocysteine + H(+). Functionally, specifically methylates guanosine-37 in various tRNAs. This is tRNA (guanine-N(1)-)-methyltransferase from Geobacillus kaustophilus (strain HTA426).